The sequence spans 778 residues: Zinc finger protein 749 (778 aa).

The KRAB domain occupies 8 to 101 (MVFEDVAIYF…ILKDILHLAE (94 aa)). Residues 152 to 174 (FTCTQGGKDFTASSDLLQQQVLN) form a C2H2-type 1; degenerate zinc finger. The segment at 196-218 (FNSSQGGKDFCHQHGLFEHQKTH) adopts a C2H2-type 2; degenerate zinc-finger fold. A C2H2-type 3; degenerate zinc finger spans residues 224 to 246 (YEFSECGELFRYNSNLIKYQQNH). The C2H2-type 4; degenerate zinc finger occupies 252 to 274 (YEGTEYGKTFIRKSNLVQHQKIH). 6 consecutive C2H2-type zinc fingers follow at residues 298–320 (YECT…QKTH), 326–348 (YECN…QKVH), 354–376 (YECS…QRVH), 382–404 (FECS…QRVH), 410–432 (YKCS…LKIH), and 438–460 (YECT…QKIH). An N6-acetyllysine modification is found at Lys-466. C2H2-type zinc fingers lie at residues 483-505 (YTCS…QKIH) and 511-533 (YECT…EKIH). At Lys-539 the chain carries N6-acetyllysine. The C2H2-type 13; degenerate zinc-finger motif lies at 556–578 (YVCSECGKAFLTQAHLDGHQKIQ). C2H2-type zinc fingers lie at residues 584-606 (YECN…QRIH), 612-634 (YKCS…QKVH), and 640-662 (YECS…QRVH). A C2H2-type 17; atypical zinc finger spans residues 668-690 (YECSNCGKFLRYRSTFIKHHKVC). The segment at 696 to 718 (HECSKCRELFRTKSSLIIHQQSH) adopts a C2H2-type 18 zinc-finger fold. The segment at 751-773 (YECGESSKVFKYNSSLIKHQIIH) adopts a C2H2-type 19; degenerate zinc-finger fold. Residues Lys-761 and Lys-768 each participate in a glycyl lysine isopeptide (Lys-Gly) (interchain with G-Cter in SUMO2) cross-link.

It belongs to the krueppel C2H2-type zinc-finger protein family.

Its subcellular location is the nucleus. May be involved in transcriptional regulation. This Homo sapiens (Human) protein is Zinc finger protein 749 (ZNF749).